The following is a 104-amino-acid chain: MSPDPHEDLGDVLTEPTQKTERPRMFKVLLHNDDYTTMEFVVGVLQRVFNKSVPEATRIMLNVHNRGVGVAGVYTAEVAETKIETVHSMAQADGFPLKCSMEPE.

Positions 1 to 20 are disordered; the sequence is MSPDPHEDLGDVLTEPTQKT.

Belongs to the ClpS family. In terms of assembly, binds to the N-terminal domain of the chaperone ClpA.

Its function is as follows. Involved in the modulation of the specificity of the ClpAP-mediated ATP-dependent protein degradation. The polypeptide is ATP-dependent Clp protease adapter protein ClpS (Desulfatibacillum aliphaticivorans).